Consider the following 518-residue polypeptide: Transcription factor TT8 (518 aa).

2 coiled-coil regions span residues 220–240 and 405–428; these read EVHE…MSEE and VNHL…KRTR. The bHLH domain maps to 359 to 408; that stretch reads REDLSHVVAERRRREKLNEKFITLRSMVPFVTKMDKVSILGDTIAYVNHL.

The protein belongs to the bHLH protein family. Homodimer. Interacts with MYB4, MYB5, MYB6, MYB82, MYB113, MYB114, MYB75/PAP1, MYB90/PAP2, and TT2. As to expression, buds, flowers and developing siliques, but not in leaves, stems and roots.

It localises to the nucleus. Transcription activator, when associated with MYB75/PAP1 or MYB90/PAP2. Involved in the control of flavonoid pigmentation. Plays a key role in regulating leucoanthocyanidin reductase (BANYULS) and dihydroflavonol-4-reductase (DFR). Not required for leucoanthocyanidin dioxygenase (LDOX) expression. This is Transcription factor TT8 from Arabidopsis thaliana (Mouse-ear cress).